The chain runs to 145 residues: Zinc finger C2H2 protein ECU06_1150 (145 aa).

A C2H2-type 1; atypical zinc finger spans residues 35-57; it reads KDCARYGEAQASKHALLAHARRH. The segment at 63–85 adopts a C2H2-type 2 zinc-finger fold; it reads FECHLCGKDYTRSDPLKKHLLRH.

This chain is Zinc finger C2H2 protein ECU06_1150, found in Encephalitozoon cuniculi (strain GB-M1) (Microsporidian parasite).